The chain runs to 1576 residues: THO complex subunit 2 (1576 aa).

Coiled coils occupy residues 293–339 (NCIM…KVEK) and 896–965 (HTSY…NWLL). Residues 923–928 (KKKKEK) carry the Nuclear localization signal motif. The segment at 1184-1576 (NEFHHKDPPP…STHKSSDKHR (393 aa)) is disordered. Residues 1218 to 1234 (KSDESSTEETDKSRERS) are compositionally biased toward basic and acidic residues. S1222 carries the post-translational modification Phosphoserine. Over residues 1251 to 1263 (GNSSNGNSSSNSS) the composition is skewed to low complexity. Composition is skewed to basic and acidic residues over residues 1265–1285 (TVKENDKEKGKEKEKEKKEKT), 1294–1343 (ILGK…EKFK), and 1353–1383 (STQEKEREKEPSRERDIAKEMKSKENVKGGE). T1385 is modified (phosphothreonine). Residues S1390, S1393, and S1417 each carry the phosphoserine modification. A compositionally biased stretch (polar residues) spans 1416-1425 (PSPSHSSTVK). T1443 is modified (phosphothreonine). The segment covering 1449-1504 (KSKEREMDKKDLDKSRERSREREKKDEKDRKERKRDHSNNDREVPPDLTKRRKEEN) has biased composition (basic and acidic residues). S1450, S1486, and S1516 each carry phosphoserine. Positions 1464-1491 (RERSREREKKDEKDRKERKRDHSNNDRE) form a coiled coil. Basic and acidic residues predominate over residues 1524–1552 (NEKDKEKNKSKSSGKEKGGDSFKSEKMDK).

Belongs to the THOC2 family. As to quaternary structure, component of the THO subcomplex, which is composed of THOC1, THOC2, THOC3, THOC5, THOC6 and THOC7. The THO subcomplex interacts with DDX39B to form the THO-DDX39B complex which multimerizes into a 28-subunit tetrameric assembly. Component of the transcription/export (TREX) complex at least composed of ALYREF/THOC4, DDX39B, SARNP/CIP29, CHTOP and the THO subcomplex; in the complex interacts with THOC1, THOC3, THOC5, THOC7 and DDX39B. TREX seems to have a dynamic structure involving ATP-dependent remodeling. Interacts with POLDIP3 and ZC3H11A.

Its subcellular location is the nucleus. It localises to the nucleus speckle. It is found in the cytoplasm. Its function is as follows. Component of the THO subcomplex of the TREX complex which is thought to couple mRNA transcription, processing and nuclear export, and which specifically associates with spliced mRNA and not with unspliced pre-mRNA. Required for efficient export of polyadenylated RNA and spliced mRNA. The THOC1-THOC2-THOC3 core complex alone is sufficient to bind export factor NXF1-NXT1 and promote ATPase activity of DDX39B; in the complex THOC2 is the only component that directly interacts with DDX39B. TREX is recruited to spliced mRNAs by a transcription-independent mechanism, binds to mRNA upstream of the exon-junction complex (EJC) and is recruited in a splicing- and cap-dependent manner to a region near the 5' end of the mRNA where it functions in mRNA export to the cytoplasm via the TAP/NXF1 pathway. Required for NXF1 localization to the nuclear rim. THOC2 (and probably the THO complex) is involved in releasing mRNA from nuclear speckle domains. Plays a role for proper neuronal development. The protein is THO complex subunit 2 (THOC2) of Rhinolophus ferrumequinum (Greater horseshoe bat).